Reading from the N-terminus, the 337-residue chain is Anthranilate phosphoribosyltransferase (337 aa).

5-phospho-alpha-D-ribose 1-diphosphate-binding positions include G82, 85–86 (GD), T90, 92–95 (NIST), 110–118 (KHGGRSVSS), and S122. G82 is an anthranilate binding site. S94 contributes to the Mg(2+) binding site. Residue R168 participates in anthranilate binding. D226 and E227 together coordinate Mg(2+).

This sequence belongs to the anthranilate phosphoribosyltransferase family. Homodimer. Requires Mg(2+) as cofactor.

The catalysed reaction is N-(5-phospho-beta-D-ribosyl)anthranilate + diphosphate = 5-phospho-alpha-D-ribose 1-diphosphate + anthranilate. It participates in amino-acid biosynthesis; L-tryptophan biosynthesis; L-tryptophan from chorismate: step 2/5. Catalyzes the transfer of the phosphoribosyl group of 5-phosphorylribose-1-pyrophosphate (PRPP) to anthranilate to yield N-(5'-phosphoribosyl)-anthranilate (PRA). The polypeptide is Anthranilate phosphoribosyltransferase (Francisella tularensis subsp. mediasiatica (strain FSC147)).